A 332-amino-acid chain; its full sequence is Ferredoxin--NADP reductase (332 aa).

Positions 20, 39, 47, 52, 92, 126, 288, and 329 each coordinate FAD.

It belongs to the ferredoxin--NADP reductase type 2 family. Homodimer. FAD is required as a cofactor.

It carries out the reaction 2 reduced [2Fe-2S]-[ferredoxin] + NADP(+) + H(+) = 2 oxidized [2Fe-2S]-[ferredoxin] + NADPH. This Geobacillus thermodenitrificans (strain NG80-2) protein is Ferredoxin--NADP reductase.